Consider the following 494-residue polypeptide: Putative transporter SVOPL (494 aa).

A run of 10 helical transmembrane segments spans residues 48–68, 86–106, 121–141, 179–199, 203–223, 281–301, 350–370, 385–405, 431–451, and 460–480; these read IALF…IMLI, VAFV…LFGL, FLWG…IWFV, VFWL…IPTI, WLIR…KFIP, TLQI…VILA, IIST…INFL, LFFL…FLFM, AIGM…APFI, and FLGA…SAFT.

The protein belongs to the major facilitator superfamily.

It is found in the membrane. This Mus musculus (Mouse) protein is Putative transporter SVOPL (Svopl).